Reading from the N-terminus, the 170-residue chain is Calcineurin subunit B type 2 (170 aa).

The N-myristoyl glycine moiety is linked to residue G2. EF-hand domains are found at residues 18-46, 50-85, 87-122, and 128-163; these read DEIKRLGRRFKKLDLDKSGSLSVEEFMSL, RHNPLVRRVIDVFDTDGDGEVDFKEFILGTSQFSVK, DEEQKLRFAFSIYDMDKDGYISNGELFQVLKMMVGN, and QLQQLVDKTIIILDKDGDGKISFEEFSAVVRDLEIH. Ca(2+) is bound by residues D31, D33, S35, S37, E42, D63, D65, D67, E69, E74, D100, D102, D104, Y106, and E111. The segment at 131–136 is calcineurin A binding; it reads QLVDKT. Positions 141, 143, 145, 147, and 152 each coordinate Ca(2+).

Belongs to the calcineurin regulatory subunit family. Forms a complex composed of a calmodulin-dependent catalytic subunit (also known as calcineurin A) and a regulatory Ca(2+)-binding subunit (also known as calcineurin B). There are three catalytic subunits, each encoded by a separate gene (PPP3CA, PPP3CB, and PPP3CC) and two regulatory subunits which are also encoded by separate genes (PPP3R1 and PPP3R2). Interacts with SPATA33 (via PQIIIT motif). Testis-specific.

The protein resides in the mitochondrion. Regulatory subunit of calcineurin, a calcium-dependent, calmodulin stimulated protein phosphatase. Confers calcium sensitivity. The polypeptide is Calcineurin subunit B type 2 (PPP3R2) (Homo sapiens (Human)).